The chain runs to 235 residues: Ubiquinone/menaquinone biosynthesis C-methyltransferase UbiE (235 aa).

The S-adenosyl-L-methionine site is built by threonine 60, aspartate 81, and serine 126.

The protein belongs to the class I-like SAM-binding methyltransferase superfamily. MenG/UbiE family.

The catalysed reaction is a 2-demethylmenaquinol + S-adenosyl-L-methionine = a menaquinol + S-adenosyl-L-homocysteine + H(+). It carries out the reaction a 2-methoxy-6-(all-trans-polyprenyl)benzene-1,4-diol + S-adenosyl-L-methionine = a 5-methoxy-2-methyl-3-(all-trans-polyprenyl)benzene-1,4-diol + S-adenosyl-L-homocysteine + H(+). It participates in quinol/quinone metabolism; menaquinone biosynthesis; menaquinol from 1,4-dihydroxy-2-naphthoate: step 2/2. Its pathway is cofactor biosynthesis; ubiquinone biosynthesis. Functionally, methyltransferase required for the conversion of demethylmenaquinol (DMKH2) to menaquinol (MKH2) and the conversion of 2-polyprenyl-6-methoxy-1,4-benzoquinol (DDMQH2) to 2-polyprenyl-3-methyl-6-methoxy-1,4-benzoquinol (DMQH2). The protein is Ubiquinone/menaquinone biosynthesis C-methyltransferase UbiE of Citrifermentans bemidjiense (strain ATCC BAA-1014 / DSM 16622 / JCM 12645 / Bem) (Geobacter bemidjiensis).